A 237-amino-acid polypeptide reads, in one-letter code: Purine nucleoside phosphorylase DeoD-type (237 aa).

H4 provides a ligand contact to a purine D-ribonucleoside. Phosphate contacts are provided by residues G20, R24, R43, and 87–90 (RVGT). Residues 179–181 (EME) and 203–204 (SD) each bind a purine D-ribonucleoside. The Proton donor role is filled by D204.

Belongs to the PNP/UDP phosphorylase family. Homohexamer; trimer of homodimers.

It catalyses the reaction a purine D-ribonucleoside + phosphate = a purine nucleobase + alpha-D-ribose 1-phosphate. The enzyme catalyses a purine 2'-deoxy-D-ribonucleoside + phosphate = a purine nucleobase + 2-deoxy-alpha-D-ribose 1-phosphate. In terms of biological role, catalyzes the reversible phosphorolytic breakdown of the N-glycosidic bond in the beta-(deoxy)ribonucleoside molecules, with the formation of the corresponding free purine bases and pentose-1-phosphate. This Exiguobacterium sp. (strain ATCC BAA-1283 / AT1b) protein is Purine nucleoside phosphorylase DeoD-type.